Reading from the N-terminus, the 336-residue chain is Glycerol-3-phosphate dehydrogenase [NAD(P)+] (336 aa).

Positions 16 and 109 each coordinate NADPH. Residues lysine 109, glycine 137, and serine 139 each coordinate sn-glycerol 3-phosphate. Alanine 141 contacts NADPH. Residues lysine 192, aspartate 245, serine 255, arginine 256, and asparagine 257 each coordinate sn-glycerol 3-phosphate. The Proton acceptor role is filled by lysine 192. Residue arginine 256 coordinates NADPH. Residues valine 280 and glutamate 282 each contribute to the NADPH site.

It belongs to the NAD-dependent glycerol-3-phosphate dehydrogenase family.

The protein resides in the cytoplasm. It catalyses the reaction sn-glycerol 3-phosphate + NAD(+) = dihydroxyacetone phosphate + NADH + H(+). The enzyme catalyses sn-glycerol 3-phosphate + NADP(+) = dihydroxyacetone phosphate + NADPH + H(+). It participates in membrane lipid metabolism; glycerophospholipid metabolism. Catalyzes the reduction of the glycolytic intermediate dihydroxyacetone phosphate (DHAP) to sn-glycerol 3-phosphate (G3P), the key precursor for phospholipid synthesis. The sequence is that of Glycerol-3-phosphate dehydrogenase [NAD(P)+] from Hyphomonas neptunium (strain ATCC 15444).